The primary structure comprises 300 residues: NAD kinase (300 aa).

Residue Asp80 is the Proton acceptor of the active site. NAD(+) is bound by residues 80–81 (DG), 154–155 (ND), Arg165, Arg182, Asp184, 195–200 (TAYALS), and Gln253.

This sequence belongs to the NAD kinase family. A divalent metal cation is required as a cofactor.

The protein localises to the cytoplasm. The catalysed reaction is NAD(+) + ATP = ADP + NADP(+) + H(+). Involved in the regulation of the intracellular balance of NAD and NADP, and is a key enzyme in the biosynthesis of NADP. Catalyzes specifically the phosphorylation on 2'-hydroxyl of the adenosine moiety of NAD to yield NADP. In Aromatoleum aromaticum (strain DSM 19018 / LMG 30748 / EbN1) (Azoarcus sp. (strain EbN1)), this protein is NAD kinase.